Reading from the N-terminus, the 210-residue chain is Putative tyrosine-protein phosphatase OCA1 (210 aa).

A Tyrosine-protein phosphatase domain is found at Asn-44–Trp-204. Cys-140 acts as the Phosphocysteine intermediate in catalysis.

The protein belongs to the protein-tyrosine phosphatase family.

The protein localises to the cytoplasm. The enzyme catalyses O-phospho-L-tyrosyl-[protein] + H2O = L-tyrosyl-[protein] + phosphate. In terms of biological role, putative tyrosine-protein phosphatase required for protection against superoxide stress. The chain is Putative tyrosine-protein phosphatase OCA1 (OCA1) from Kluyveromyces lactis (strain ATCC 8585 / CBS 2359 / DSM 70799 / NBRC 1267 / NRRL Y-1140 / WM37) (Yeast).